The sequence spans 338 residues: Nicotinate-nucleotide--dimethylbenzimidazole phosphoribosyltransferase (338 aa).

Glu-306 functions as the Proton acceptor in the catalytic mechanism.

It belongs to the CobT family.

The enzyme catalyses 5,6-dimethylbenzimidazole + nicotinate beta-D-ribonucleotide = alpha-ribazole 5'-phosphate + nicotinate + H(+). It functions in the pathway nucleoside biosynthesis; alpha-ribazole biosynthesis; alpha-ribazole from 5,6-dimethylbenzimidazole: step 1/2. Catalyzes the synthesis of alpha-ribazole-5'-phosphate from nicotinate mononucleotide (NAMN) and 5,6-dimethylbenzimidazole (DMB). The chain is Nicotinate-nucleotide--dimethylbenzimidazole phosphoribosyltransferase from Cereibacter sphaeroides (strain KD131 / KCTC 12085) (Rhodobacter sphaeroides).